A 413-amino-acid chain; its full sequence is N5-carboxyaminoimidazole ribonucleotide synthase (413 aa).

Residues 1–21 (MKRVSEQAGNPDGNPQAHVPG) form a disordered region. ATP contacts are provided by residues lysine 122, lysine 162, 199–202 (EEKV), glutamate 207, and 289–290 (NE). An ATP-grasp domain is found at 126-319 (RERLAELGAP…QFEQHLRAVM (194 aa)).

The protein belongs to the PurK/PurT family. In terms of assembly, homodimer.

The enzyme catalyses 5-amino-1-(5-phospho-beta-D-ribosyl)imidazole + hydrogencarbonate + ATP = 5-carboxyamino-1-(5-phospho-D-ribosyl)imidazole + ADP + phosphate + 2 H(+). The protein operates within purine metabolism; IMP biosynthesis via de novo pathway; 5-amino-1-(5-phospho-D-ribosyl)imidazole-4-carboxylate from 5-amino-1-(5-phospho-D-ribosyl)imidazole (N5-CAIR route): step 1/2. Its function is as follows. Catalyzes the ATP-dependent conversion of 5-aminoimidazole ribonucleotide (AIR) and HCO(3)(-) to N5-carboxyaminoimidazole ribonucleotide (N5-CAIR). In Corynebacterium ammoniagenes (Brevibacterium ammoniagenes), this protein is N5-carboxyaminoimidazole ribonucleotide synthase.